The sequence spans 770 residues: MAQWNQLQQLDTRYLEQLHQLYSDSFPMELRQFLAPWIESQDWAYAASKESHATLVFHNLLGEIDQQYSRFLQESNVLYQHNLRRIKQFLQSRYLEKPMEIARIVARCLWEESRLLQTAATAAQQGGQANHPTAAVVTEKQQMLEQHLQDVRKRVQDLEQKMKVVENLQDDFDFNYKTLKSQGDMQDLNGNNQSVTRQKMQQLEQMLTALDQMRRSIVSELAGLLSAMEYVQKTLTDEELADWKRRQQIACIGGPPNICLDRLENWITSLAESQLQTRQQIKKLEELQQKVSYKGDPIVQHRPMLEERIVELFRNLMKSAFVVERQPCMPMHPDRPLVIKTGVQFTTKVRLLVKFPELNYQLKIKVCIDKDSGDVAALRGSRKFNILGTNTKVMNMEESNNGSLSAEFKHLTLREQRCGNGGRANCDASLIVTEELHLITFETEVYHQGLKIDLETHSLPVVVISNICQMPNAWASILWYNMLTNNPKNVNFFTKPPIGTWDQVAEVLSWQFSSTTKRGLSIEQLSTLAEKLLGPGVNYSGCQITWAKFCKENMAGKGFSFWVWLDNIIDLVKKYILALWNEGYIMGFISKERERAILSTKPPGTFLLRFSESSKEGGVTFTWVEKDISGKTQIQSVEPYTKQQLNNMSFAEIIMGYKIMDATNILVSPLVYLYPDIPKEEAFGKYCRPESQEHPEADPGSAAPYLKTKFICVTPTTCSNTIDLPMSPRTLDSLMQFGNNGEGAEPSAGGQFESLTFDMELNSECATSPM.

Ala-2 carries the post-translational modification N-acetylalanine. N6-acetyllysine occurs at positions 49 and 87. The short motif at Asp-150–Met-162 is the Essential for nuclear import element. In terms of domain architecture, SH2 spans Trp-580–Leu-670. Allysine; alternate occurs at positions 601, 615, and 631. N6-acetyllysine; alternate is present on residues Lys-601, Lys-615, and Lys-631. The residue at position 640 (Tyr-640) is a Phosphotyrosine; by TYK2. Allysine; alternate is present on Lys-685. At Lys-685 the chain carries N6-acetyllysine; alternate. Tyr-705 bears the Phosphotyrosine; by FER and PTK6 mark. Lys-707 is modified (N6-acetyllysine). Position 714 is a phosphothreonine (Thr-714). A Phosphoserine; by DYRK2, NLK, NEK6, IRAK1, RPS6KA5, ZIPK/DAPK3 and PKC/PRKCE modification is found at Ser-727.

It belongs to the transcription factor STAT family. In terms of assembly, forms a homodimer or a heterodimer with a related family member (at least STAT1). Component of a promoter-binding complex composed of STAT3, NFATC3 and NFATC4; complex formation is enhanced by calcineurin. Interacts with IL31RA, NCOA1, PELP1, SIPAR, SOCS7, STATIP1 and TMF1. Interacts with IL23R in presence of IL23. Interacts (via SH2 domain) with NLK. Interacts with ARL2BP; the interaction is enhanced by LIF and JAK1 expression. Interacts with KPNA4 and KPNA5; KPNA4 may be the primary mediator of nuclear import. Interacts with CAV2; the interaction is increased on insulin-induced tyrosine phosphorylation of CAV2 and leads to STAT3 activation. Interacts with ARL2BP; interaction is enhanced with ARL2. Interacts with NEK6. Binds to CDK9 when activated and nuclear. Interacts with BMX. Interacts with ZIPK/DAPK3. Interacts with PIAS3; the interaction occurs on stimulation by IL6, CNTF or OSM and inhibits the DNA binding activity of STAT3. In prostate cancer cells, interacts with PRKCE and promotes DNA binding activity of STAT3. Interacts with STMN3, antagonizing its microtubule-destabilizing activity. Interacts with the 'Lys-129' acetylated form of BIRC5/survivin. Interacts with FER. Interacts (via SH2 domain) with EIF2AK2/PKR (via the kinase catalytic domain). Interacts with INPP5F; the interaction is independent of STAT3 Tyr-705 phosphorylation status. Interacts with FGFR4. Interacts with OCIAD1 and OCIAD2. Interacts (unphosphorylated or phosphorylated at Ser-727) with PHB1. Interacts and may form heterodimers with NHLH1. Found in a complex with SLC39A6, SLC39A10 and with the 'Ser-727' phosphorylated form of STAT3 throughout mitosis. Interacts (when acetylated) with EP300 (via bromo domain); interaction takes place following STAT3 acetylation by EP300 and promotes enhanceosome assembly. Interacts (when acetylated) with BRD2 (via bromo domain); interaction promotes STAT3 recruitment to chromatin and T-helper Th17 cell differentiation. Interacts with FAM220A/SIPAR; the interaction occurs in both the nucleus and the cytoplasm, is enhanced by IL6 and promotes STAT3 dephosphorylation. Interacts in both unphosphorylated and phosphorylated forms with FAM220A but interacts preferentially in the phosphorylated form in the nucleus. Interacts with PTPN2; the interaction is promoted by FAM220A and leads to STAT3 dephosphorylation which negatively regulates STAT3 transcriptional activator activity. Post-translationally, activated through tyrosine phosphorylation by BMX. Tyrosine phosphorylated in response to IL6, IL11, CNTF, LIF, KITLG/SCF, CSF1, EGF, PDGF, IFN-alpha and OSM. Activated KIT promotes phosphorylation on tyrosine residues and subsequent translocation to the nucleus. Tyrosine phosphorylated in response to constitutively activated FGFR1, FGFR2, FGFR3 and FGFR4. Phosphorylated on serine upon DNA damage, probably by ATM or ATR. Serine phosphorylation is important for the formation of stable DNA-binding STAT3 homodimers and maximal transcriptional activity. ARL2BP may participate in keeping the phosphorylated state of STAT3 within the nucleus. Tyrosine phosphorylated upon stimulation with EGF. Upon LPS challenge, phosphorylated within the nucleus by IRAK1. Phosphorylated on Ser-727 by RPS6KA5. Dephosphorylation on tyrosine residues by PTPN2 negatively regulates IL6/interleukin-6 signaling. Phosphorylation at Tyr-705 by FER, isoform M2 of PKM (PKM2) or PTK6 leads to an increase of its transcriptional activity. Phosphorylation at Tyr-705 is increased in the presence of calcineurin. Phosphorylation at Tyr-640 by TYK2 negatively regulates transcriptional activity. Acetylated on lysine residues by EP300/p300, promoting its activation. Acetylation at Lys-49 and Lys-87 by EP300/p300 promotes its activation. Acetylation at Lys-87 by EP300/p300 promotes its association with BRD2 and recruitment to chromatin. Deacetylated at Lys-49 and Lys-87 by HDAC1. Acetylation at Lys-685 by EP300/p300 promotes its homodimerization and activation. Deacetylated at Lys-685 by HDAC3. Acetylated on lysine residues by CREBBP. Deacetylation by LOXL3 leads to disrupt STAT3 dimerization and inhibit STAT3 transcription activity. Oxidation of lysine residues to allysine on STAT3 preferentially takes place on lysine residues that are acetylated. In terms of processing, some lysine residues are oxidized to allysine by LOXL3, leading to disrupt STAT3 dimerization and inhibit STAT3 transcription activity. Oxidation of lysine residues to allysine on STAT3 preferentially takes place on lysine residues that are acetylated. Detected in lung, heart, oviduct, ovary, uterus and kidney (at protein level). Detected in ovary, oviduct, and at lower levels in uterus and lung.

The protein resides in the cytoplasm. Its subcellular location is the nucleus. In terms of biological role, signal transducer and transcription activator that mediates cellular responses to interleukins, KITLG/SCF, LEP and other growth factors. Once activated, recruits coactivators, such as NCOA1 or MED1, to the promoter region of the target gene. May mediate cellular responses to activated FGFR1, FGFR2, FGFR3 and FGFR4. Upon activation of IL6ST/gp130 signaling by interleukin-6 (IL6), binds to the IL6-responsive elements identified in the promoters of various acute-phase protein genes. Activated by IL31 through IL31RA. Acts as a regulator of inflammatory response by regulating differentiation of naive CD4(+) T-cells into T-helper Th17 or regulatory T-cells (Treg): acetylation promotes its transcription activity and cell differentiation while deacetylation and oxidation of lysine residues by LOXL3 inhibits differentiation. Involved in cell cycle regulation by inducing the expression of key genes for the progression from G1 to S phase, such as CCND1. Mediates the effects of LEP on melanocortin production, body energy homeostasis and lactation. May play an apoptotic role by transctivating BIRC5 expression under LEP activation. Cytoplasmic STAT3 represses macroautophagy by inhibiting EIF2AK2/PKR activity. Plays a crucial role in basal beta cell functions, such as regulation of insulin secretion. Following JAK/STAT signaling activation and as part of a complex with NFATC3 and NFATC4, binds to the alpha-beta E4 promoter region of CRYAB and activates transcription in cardiomyocytes. Plays an important role in host defense in methicillin-resistant S.aureus lung infection by regulating the expression of the antimicrobial lectin REG3G. This Sus scrofa (Pig) protein is Signal transducer and activator of transcription 3 (STAT3).